The following is a 231-amino-acid chain: Putative S-adenosylmethionine-dependent methyltransferase RcsF (231 aa).

One can recognise a TsaA-like domain in the interval 5 to 142; the sequence is VSPIGYIRSC…YVPYADAVAD (138 aa). S-adenosyl-L-methionine-binding positions include 22–24, 63–64, Arg91, and 122–125; these read PRQ, HQ, and LDGT.

The protein belongs to the tRNA methyltransferase O family.

The protein is Putative S-adenosylmethionine-dependent methyltransferase RcsF (rcsF) of Pseudomonas aeruginosa (strain ATCC 15692 / DSM 22644 / CIP 104116 / JCM 14847 / LMG 12228 / 1C / PRS 101 / PAO1).